Reading from the N-terminus, the 285-residue chain is Nucleotide-binding protein Pfl01_0854 (285 aa).

8-15 provides a ligand contact to ATP; sequence GRSGSGKS. 60 to 63 contributes to the GTP binding site; it reads DARN.

Belongs to the RapZ-like family.

In terms of biological role, displays ATPase and GTPase activities. The chain is Nucleotide-binding protein Pfl01_0854 from Pseudomonas fluorescens (strain Pf0-1).